Consider the following 436-residue polypeptide: Cytochrome P450 monooxygenase phqO (436 aa).

Cysteine 377 is a binding site for heme.

The protein belongs to the cytochrome P450 family. The cofactor is heme.

Its pathway is alkaloid biosynthesis. Cytochrome P450 monooxygenase; part of the gene cluster that mediates the biosynthesis of paraherquamide, a fungal indole alkaloid that belongs to a family of natural products containing a characteristic bicyclo[2.2.2]diazaoctane core. The first steps in the biosynthesis of paraherquamide is the production of the beta-methyl-proline precursor from L-isoleucine. They require oxidation of a terminally hydroxylated L-isoleucine to the corresponding aldehyde by enzymes which have still to be identified. Spontaneous cyclization and dehydration would yield the 4-methyl pyrolline-5-carboxylic acid, which is then reduced by the pyrroline-5-carboxylate reductase phqD leading to the beta-methyl-proline precursor. The next step of paraherquamide biosynthesis involves coupling of beta-methyl-proline and L-tryptophan by the bimodular NRPS phqB, to produce a monooxopiperazine intermediate. The reductase (R) domain of phqB utilizes NADPH for hydride transfer to reduce the thioester bond of the T domain-tethered linear dipeptide to a hemithioaminal intermediate, which spontaneously cleaves the C-S bond to release the aldehyde product. This compound undergoes spontaneous cyclization and dehydration to give a dienamine which is reverse prenylated at C-2 by the reverse prenyltransferase phqJ. The other prenyltransferase present in the cluster, phqI may be a redundant gene in the pathway. During biosynthetic assembly, the key step to produce the polycyclic core is catalyzed by the bifunctional reductase and intramolecular [4+2] Diels-Alderase, phqE, resulting in formation of the [2.2.2] diazaoctane intermediate preparaherquamide. Following formation of preparaherquamide, an indole 2,3-epoxidation-initiated pinacol-like rearrangement is catalyzed by the phqK FAD-dependent monooxygenase. The prenyltransferase phqA, the cytochrome P450 monooxygenase phqL, and the FAD-linked oxidoreductase phqH (or the cytochrome P450 monooxygenase phqM), are proposed to be involved in the formation of the pyran ring. The FAD-dependent monooxygenase phqK is likely responsible for generation of the spiro-oxindole, and the N-methylation is likely mediated by the phqN methyltransferase leading to the isolable natural product paraherquamide F. However, the order of these biosynthetic steps has still to be determined. In late-stage paraherquamide biosynthesis, the third P450 monooxygenase, phqO, is probably responsible for the C-14 hydroxylation, transforming paraherquamide F to paraherquamide G, and paraherquamide E to the final product paraherquamide A. The expansion from the 6-membered ring pyran (in paraherquamides F and G) to the 7-membered dioxepin ring (in paraherquamides A and E) represents a poorly understood but intriguing process that probably involves the 2-oxoglutarate-dependent dioxygenase phqC. Finally, the remaining members of the paraherquamide cluster, including phqI as well as phqM (or phqH), do not have a clearly prescribed role and appear to be redundant. This is Cytochrome P450 monooxygenase phqO from Penicillium fellutanum.